The chain runs to 323 residues: RING-H2 finger protein ATL32 (323 aa).

Positions 1-28 are cleaved as a signal peptide; it reads MMTRVECFNPHRWIILHVAIIIQSKANA. A helical membrane pass occupies residues 47 to 67; sequence TTVFAVLVTLFFLTGLLSVYI. The segment at 124 to 166 adopts an RING-type; atypical zinc-finger fold; the sequence is CAICLNELEDHETVRLLPICNHLFHIDCIDTWLYSHATCPVCR. A disordered region spans residues 210 to 229; that stretch reads SSEISGKFPRSNSTGHSMDR.

The protein belongs to the RING-type zinc finger family. ATL subfamily.

The protein localises to the membrane. It catalyses the reaction S-ubiquitinyl-[E2 ubiquitin-conjugating enzyme]-L-cysteine + [acceptor protein]-L-lysine = [E2 ubiquitin-conjugating enzyme]-L-cysteine + N(6)-ubiquitinyl-[acceptor protein]-L-lysine.. It functions in the pathway protein modification; protein ubiquitination. In Arabidopsis thaliana (Mouse-ear cress), this protein is RING-H2 finger protein ATL32 (ATL32).